We begin with the raw amino-acid sequence, 317 residues long: ADIPOR-like receptor IZH1 (317 aa).

The Lumenal portion of the chain corresponds to 1–80 (MSEERGMKEQ…FNNESINIYT (80 aa)). N73 carries an N-linked (GlcNAc...) asparagine glycan. A helical transmembrane segment spans residues 81–101 (HLIPGVAYLVLFLIFADLVLA). Residues 102–113 (QLLPGLDAGEHR) are Cytoplasmic-facing. Residues 114 to 136 (MLRFYLLGAFTCLACSSCFHCLK) traverse the membrane as a helical segment. Over 137 to 148 (QHSEPHSRLWSK) the chain is Lumenal. The chain crosses the membrane as a helical span at residues 149 to 169 (VDYLGILAQITCSTISLLYYG). Residues 170–175 (YHSYPS) are Cytoplasmic-facing. Residues 176–196 (HFVFFSTLTVALCSACAVLVL) form a helical membrane-spanning segment. A glycan (N-linked (GlcNAc...) asparagine) is linked at N197. Over 197 to 210 (NDSFNTVAFRPLRA) the chain is Lumenal. The chain crosses the membrane as a helical span at residues 211–231 (FLFMAFGLSGVIPVLAGSYQF). Over 232 to 243 (GFAEWAARIQLK) the chain is Cytoplasmic. Residues 244 to 264 (YVLYEAVFYITGALVYGFRIP) traverse the membrane as a helical segment. Residues 265–283 (ERFAPGKFDMVGHSHQIFH) lie on the Lumenal side of the membrane. Residues 284 to 304 (LLVVLGTLCHFRAVTGSYIFI) form a helical membrane-spanning segment. The Cytoplasmic portion of the chain corresponds to 305-317 (CTGKHYSSLLMFI).

It belongs to the ADIPOR family.

The protein localises to the endoplasmic reticulum membrane. In terms of biological role, ADIPOR-like receptor involved in zinc metabolism either by altering membrane sterol content or by directly altering cellular zinc levels. The protein is ADIPOR-like receptor IZH1 (IZH1) of Eremothecium gossypii (strain ATCC 10895 / CBS 109.51 / FGSC 9923 / NRRL Y-1056) (Yeast).